The chain runs to 102 residues: Large ribosomal subunit protein uL24 (102 aa).

It belongs to the universal ribosomal protein uL24 family. In terms of assembly, part of the 50S ribosomal subunit.

One of two assembly initiator proteins, it binds directly to the 5'-end of the 23S rRNA, where it nucleates assembly of the 50S subunit. In terms of biological role, one of the proteins that surrounds the polypeptide exit tunnel on the outside of the subunit. The polypeptide is Large ribosomal subunit protein uL24 (Cupriavidus metallidurans (strain ATCC 43123 / DSM 2839 / NBRC 102507 / CH34) (Ralstonia metallidurans)).